Here is a 729-residue protein sequence, read N- to C-terminus: Fatty acid oxidation complex subunit alpha (729 aa).

The interval 1–189 is enoyl-CoA hydratase/isomerase; sequence MLYKGDTLYL…KIGLVDGVVK (189 aa). Asp-296 contributes to the substrate binding site. The interval 311-729 is 3-hydroxyacyl-CoA dehydrogenase; the sequence is ETPKQAAVLG…ARPVGDLKTA (419 aa). NAD(+) is bound by residues Met-324, Asp-343, 400–402, Lys-407, and Ser-429; that span reads VVE. His-450 functions as the For 3-hydroxyacyl-CoA dehydrogenase activity in the catalytic mechanism. Position 453 (Asn-453) interacts with NAD(+). Residues Asn-500 and Tyr-660 each coordinate substrate. The interval 708–729 is disordered; that stretch reads RHNEPYYPPVEPARPVGDLKTA.

The protein in the N-terminal section; belongs to the enoyl-CoA hydratase/isomerase family. In the C-terminal section; belongs to the 3-hydroxyacyl-CoA dehydrogenase family. Heterotetramer of two alpha chains (FadB) and two beta chains (FadA).

The catalysed reaction is a (3S)-3-hydroxyacyl-CoA + NAD(+) = a 3-oxoacyl-CoA + NADH + H(+). The enzyme catalyses a (3S)-3-hydroxyacyl-CoA = a (2E)-enoyl-CoA + H2O. It carries out the reaction a 4-saturated-(3S)-3-hydroxyacyl-CoA = a (3E)-enoyl-CoA + H2O. It catalyses the reaction (3S)-3-hydroxybutanoyl-CoA = (3R)-3-hydroxybutanoyl-CoA. The catalysed reaction is a (3Z)-enoyl-CoA = a 4-saturated (2E)-enoyl-CoA. The enzyme catalyses a (3E)-enoyl-CoA = a 4-saturated (2E)-enoyl-CoA. It participates in lipid metabolism; fatty acid beta-oxidation. Involved in the aerobic and anaerobic degradation of long-chain fatty acids via beta-oxidation cycle. Catalyzes the formation of 3-oxoacyl-CoA from enoyl-CoA via L-3-hydroxyacyl-CoA. It can also use D-3-hydroxyacyl-CoA and cis-3-enoyl-CoA as substrate. The chain is Fatty acid oxidation complex subunit alpha from Escherichia coli O7:K1 (strain IAI39 / ExPEC).